A 121-amino-acid polypeptide reads, in one-letter code: Protein AC4 (121 aa).

The tract at residues 11–30 (RGQSSNPHTSESQERNIQTG) is disordered. Residues 12–30 (GQSSNPHTSESQERNIQTG) show a composition bias toward polar residues.

Belongs to the geminiviridae protein AC4/C4 family.

Its function is as follows. Pathogenicity determinant. May act as a suppressor of RNA-mediated gene silencing, also known as post-transcriptional gene silencing (PTGS), a mechanism of plant viral defense that limits the accumulation of viral RNAs. The protein is Protein AC4 of Cabbage leaf curl virus (isolate Jamaica) (CaLCuV).